The chain runs to 232 residues: Phosphatidylserine decarboxylase proenzyme (232 aa).

The active-site Schiff-base intermediate with substrate; via pyruvic acid is Ser190. Position 190 is a pyruvic acid (Ser); by autocatalysis (Ser190).

It belongs to the phosphatidylserine decarboxylase family. PSD-A subfamily. Heterodimer of a large membrane-associated beta subunit and a small pyruvoyl-containing alpha subunit. The cofactor is pyruvate. Post-translationally, is synthesized initially as an inactive proenzyme. Formation of the active enzyme involves a self-maturation process in which the active site pyruvoyl group is generated from an internal serine residue via an autocatalytic post-translational modification. Two non-identical subunits are generated from the proenzyme in this reaction, and the pyruvate is formed at the N-terminus of the alpha chain, which is derived from the carboxyl end of the proenzyme. The post-translation cleavage follows an unusual pathway, termed non-hydrolytic serinolysis, in which the side chain hydroxyl group of the serine supplies its oxygen atom to form the C-terminus of the beta chain, while the remainder of the serine residue undergoes an oxidative deamination to produce ammonia and the pyruvoyl prosthetic group on the alpha chain.

The protein localises to the cell membrane. The enzyme catalyses a 1,2-diacyl-sn-glycero-3-phospho-L-serine + H(+) = a 1,2-diacyl-sn-glycero-3-phosphoethanolamine + CO2. It participates in phospholipid metabolism; phosphatidylethanolamine biosynthesis; phosphatidylethanolamine from CDP-diacylglycerol: step 2/2. Functionally, catalyzes the formation of phosphatidylethanolamine (PtdEtn) from phosphatidylserine (PtdSer). This is Phosphatidylserine decarboxylase proenzyme from Cereibacter sphaeroides (strain ATCC 17025 / ATH 2.4.3) (Rhodobacter sphaeroides).